A 235-amino-acid chain; its full sequence is MRPDDINPRTGLVVALVSVFLVFGFMFTVSGMKGETLGNIPLLAIGPAICLPGIAAIALARKTEGCTKWPENELLWVRKLPCFRKPKDKEVVELLRTPSDLESGKGSSDELAKKAGLRGKQLPQGPGEVPMASSVTTPTPTEEGECQSLVQSGRQEETSRYLDGYCPSASSLAYSALDAKCSAWDRSDRPEPEDSIFFVPQDSIIVCSYKQNSPYDRYCCYINQSQGRWDHETIV.

Helical transmembrane passes span 12–32 (LVVA…VSGM) and 40–60 (IPLL…IALA). The interval 99–146 (SDLESGKGSSDELAKKAGLRGKQLPQGPGEVPMASSVTTPTPTEEGEC) is disordered.

The protein resides in the membrane. This Mus musculus (Mouse) protein is Transmembrane protein 215 (Tmem215).